Reading from the N-terminus, the 387-residue chain is Phosphoglycerate kinase (387 aa).

Residues 21 to 23 (DLN), R36, and 59 to 62 (HLGR) contribute to the substrate site. Residue K84 is modified to N6-acetyllysine. Substrate is bound by residues R113 and R146. ATP is bound by residues K197, E314, and 340 to 343 (GGDT).

The protein belongs to the phosphoglycerate kinase family. Monomer.

The protein resides in the cytoplasm. The catalysed reaction is (2R)-3-phosphoglycerate + ATP = (2R)-3-phospho-glyceroyl phosphate + ADP. It functions in the pathway carbohydrate degradation; glycolysis; pyruvate from D-glyceraldehyde 3-phosphate: step 2/5. This is Phosphoglycerate kinase from Escherichia coli O9:H4 (strain HS).